The chain runs to 335 residues: Glycerol-3-phosphate dehydrogenase [NAD(P)+] (335 aa).

Ser-12, Trp-13, and Lys-107 together coordinate NADPH. Sn-glycerol 3-phosphate-binding residues include Lys-107, Gly-138, and Ser-140. NADPH is bound at residue Ala-142. Sn-glycerol 3-phosphate-binding residues include Lys-193, Asp-246, Ser-256, Arg-257, and Asn-258. Residue Lys-193 is the Proton acceptor of the active site. Arg-257 is an NADPH binding site. Residues Val-281 and Glu-283 each coordinate NADPH.

This sequence belongs to the NAD-dependent glycerol-3-phosphate dehydrogenase family.

It is found in the cytoplasm. It catalyses the reaction sn-glycerol 3-phosphate + NAD(+) = dihydroxyacetone phosphate + NADH + H(+). The enzyme catalyses sn-glycerol 3-phosphate + NADP(+) = dihydroxyacetone phosphate + NADPH + H(+). It participates in membrane lipid metabolism; glycerophospholipid metabolism. Functionally, catalyzes the reduction of the glycolytic intermediate dihydroxyacetone phosphate (DHAP) to sn-glycerol 3-phosphate (G3P), the key precursor for phospholipid synthesis. This Geobacter sulfurreducens (strain ATCC 51573 / DSM 12127 / PCA) protein is Glycerol-3-phosphate dehydrogenase [NAD(P)+].